Consider the following 441-residue polypeptide: Homogentisate 1,2-dioxygenase (441 aa).

Histidine 287 (proton acceptor) is an active-site residue. 2 residues coordinate Fe cation: histidine 330 and glutamate 336. Positions 345 and 366 each coordinate homogentisate. Histidine 366 is a binding site for Fe cation.

It belongs to the homogentisate dioxygenase family. In terms of assembly, hexamer; dimer of trimers. It depends on Fe cation as a cofactor.

The catalysed reaction is homogentisate + O2 = 4-maleylacetoacetate + H(+). Its pathway is amino-acid degradation; L-phenylalanine degradation; acetoacetate and fumarate from L-phenylalanine: step 4/6. Functionally, involved in the catabolism of homogentisate (2,5-dihydroxyphenylacetate or 2,5-OH-PhAc), a central intermediate in the degradation of phenylalanine and tyrosine. Catalyzes the oxidative ring cleavage of the aromatic ring of homogentisate to yield maleylacetoacetate. The protein is Homogentisate 1,2-dioxygenase of Xanthomonas oryzae pv. oryzae (strain MAFF 311018).